The primary structure comprises 162 residues: MDDATKSSLKAIPLCKTKASPRDGDLWIERLKEEYEAIIAAVQNNKDCDRDWFQLESNERGTKWFGKCWYFHNMVKYEFDVEFDIPITYPVTAPEIALPELDGKTAKMYRGGKICLSEHFKPLWARNTPKFGIAHAFALGLGPWMAVEIPDLIEKGLIQPKA.

The active-site Glycyl thioester intermediate is Cys115.

This sequence belongs to the ubiquitin-conjugating enzyme family. UFC1 subfamily. In terms of assembly, interacts with uba-5. Expressed in the intestine.

Its function is as follows. E2-like enzyme which forms an intermediate with ufm-1. The intermediate is formed via a thioester linkage. The polypeptide is Ubiquitin-fold modifier-conjugating enzyme 1 (Caenorhabditis elegans).